A 227-amino-acid polypeptide reads, in one-letter code: Flagellar L-ring protein 2 (227 aa).

An N-terminal signal peptide occupies residues 1–17; that stretch reads MKSKLAITMVSALLLAA. The N-palmitoyl cysteine moiety is linked to residue Cys-18. Cys-18 carries the S-diacylglycerol cysteine lipid modification.

Belongs to the FlgH family. The basal body constitutes a major portion of the flagellar organelle and consists of four rings (L,P,S, and M) mounted on a central rod.

Its subcellular location is the cell outer membrane. The protein resides in the bacterial flagellum basal body. In terms of biological role, assembles around the rod to form the L-ring and probably protects the motor/basal body from shearing forces during rotation. The chain is Flagellar L-ring protein 2 from Chromobacterium violaceum (strain ATCC 12472 / DSM 30191 / JCM 1249 / CCUG 213 / NBRC 12614 / NCIMB 9131 / NCTC 9757 / MK).